The sequence spans 87 residues: Small ribosomal subunit protein uS17 (87 aa).

It belongs to the universal ribosomal protein uS17 family. In terms of assembly, part of the 30S ribosomal subunit.

One of the primary rRNA binding proteins, it binds specifically to the 5'-end of 16S ribosomal RNA. This chain is Small ribosomal subunit protein uS17, found in Cytophaga hutchinsonii (strain ATCC 33406 / DSM 1761 / CIP 103989 / NBRC 15051 / NCIMB 9469 / D465).